The following is a 412-amino-acid chain: UPF0761 membrane protein LPC_2650 (412 aa).

Transmembrane regions (helical) follow at residues alanine 36–phenylalanine 56, leucine 99–glutamate 119, alanine 137–alanine 157, isoleucine 177–valine 197, glycine 210–isoleucine 230, and alanine 241–leucine 261.

Belongs to the UPF0761 family.

It is found in the cell inner membrane. The sequence is that of UPF0761 membrane protein LPC_2650 from Legionella pneumophila (strain Corby).